Reading from the N-terminus, the 336-residue chain is Nitrilase (336 aa).

The region spanning 5–278 (LKVACVQAAP…EGLLYATLDP (274 aa)) is the CN hydrolase domain. Glu45 functions as the Proton acceptor in the catalytic mechanism. Catalysis depends on Lys127, which acts as the Proton donor. Catalysis depends on Cys161, which acts as the Nucleophile.

Belongs to the carbon-nitrogen hydrolase superfamily. Nitrilase family.

It catalyses the reaction a nitrile + 2 H2O = a carboxylate + NH4(+). It carries out the reaction (indol-3-yl)acetonitrile + 2 H2O = (indol-3-yl)acetate + NH4(+). The enzyme catalyses phenylpropanonitrile + 2 H2O = 3-phenylpropanoate + NH4(+). Arylacetonitrilase which is capable of hydrolyzing indole-3-acetonitrile (IAN) to the plant hormone indole-3-acetate (IAA), and allows the plant pathogenic bacterium to use IAN as a sole nitrogen source. Is also able to hydrolyze phenylpropionitrile (PPN), allowing the use of this compound as a sole nitrogen source. This enzyme may represent an additional mechanism for IAA biosynthesis or may be used to degrade and assimilate aldoximes and nitriles produced during host plant secondary metabolism. In Pseudomonas syringae pv. syringae (strain B728a), this protein is Nitrilase.